A 511-amino-acid chain; its full sequence is Ribosome biogenesis protein YTM1 (511 aa).

The segment at 9 to 112 (VKVVFVTRDE…EVSLSIEYIR (104 aa)) is ubiquitin-like (UBL) domain. The tract at residues 122-511 (SFSNPDWVAA…IQINNNPQSA (390 aa)) is sufficient for interaction with ERB1 and association with 66S pre-ribosomes. WD repeat units follow at residues 124–168 (SNPD…TGQL), 170–208 (GHNSAAKAVRWISNDQLVSGGSDRLLYLWNPDGKKYRRK), 248–287 (GHTAPINDLAVHAKTGKIISASADGSVGLWSTDYNDMPAI), 332–372 (GHSA…AVQS), 383–423 (TRST…QVAT), 429–470 (GHTN…SLHV), and 477–511 (TENNAVFGVDWKQNLGIVSGGQDNKIQINNNPQSA). Residues 207–228 (RKEPGQVGKKELNYDSEEDSDE) are disordered. Residues 208–219 (KEPGQVGKKELN) show a composition bias toward basic and acidic residues.

The protein belongs to the WD repeat WDR12/YTM1 family. In terms of assembly, component of the NOP7 complex, composed of ERB1, NOP7 and YTM1. The complex is held together by ERB1, which interacts with NOP7 via its N-terminal domain and with YTM1 via a high-affinity interaction between the seven-bladed beta-propeller domains of the 2 proteins. The NOP7 complex associates with the 66S pre-ribosome. Interacts (via UBL domain) with MDN1 (via VWFA/MIDAS domain).

The protein localises to the nucleus. Its subcellular location is the nucleolus. It is found in the nucleoplasm. Functionally, component of the NOP7 complex, which is required for maturation of the 25S and 5.8S ribosomal RNAs and formation of the 60S ribosome. The sequence is that of Ribosome biogenesis protein YTM1 from Yarrowia lipolytica (strain CLIB 122 / E 150) (Yeast).